Reading from the N-terminus, the 569-residue chain is Proline--tRNA ligase (569 aa).

The protein belongs to the class-II aminoacyl-tRNA synthetase family. ProS type 1 subfamily. As to quaternary structure, homodimer.

It is found in the cytoplasm. The enzyme catalyses tRNA(Pro) + L-proline + ATP = L-prolyl-tRNA(Pro) + AMP + diphosphate. Its function is as follows. Catalyzes the attachment of proline to tRNA(Pro) in a two-step reaction: proline is first activated by ATP to form Pro-AMP and then transferred to the acceptor end of tRNA(Pro). As ProRS can inadvertently accommodate and process non-cognate amino acids such as alanine and cysteine, to avoid such errors it has two additional distinct editing activities against alanine. One activity is designated as 'pretransfer' editing and involves the tRNA(Pro)-independent hydrolysis of activated Ala-AMP. The other activity is designated 'posttransfer' editing and involves deacylation of mischarged Ala-tRNA(Pro). The misacylated Cys-tRNA(Pro) is not edited by ProRS. This chain is Proline--tRNA ligase, found in Lactiplantibacillus plantarum (strain ATCC BAA-793 / NCIMB 8826 / WCFS1) (Lactobacillus plantarum).